A 74-amino-acid polypeptide reads, in one-letter code: RNA-binding protein Hfq (74 aa).

One can recognise a Sm domain in the interval 9 to 69; sequence DQFLNQLRKD…ISTFAPEKNV (61 aa).

It belongs to the Hfq family. Homohexamer.

In terms of biological role, RNA chaperone that binds small regulatory RNA (sRNAs) and mRNAs to facilitate mRNA translational regulation in response to envelope stress, environmental stress and changes in metabolite concentrations. Also binds with high specificity to tRNAs. This is RNA-binding protein Hfq from Geobacillus sp. (strain WCH70).